The chain runs to 489 residues: Glycogen synthase (489 aa).

Lys15 is a binding site for ADP-alpha-D-glucose.

Belongs to the glycosyltransferase 1 family. Bacterial/plant glycogen synthase subfamily.

It carries out the reaction [(1-&gt;4)-alpha-D-glucosyl](n) + ADP-alpha-D-glucose = [(1-&gt;4)-alpha-D-glucosyl](n+1) + ADP + H(+). It functions in the pathway glycan biosynthesis; glycogen biosynthesis. In terms of biological role, synthesizes alpha-1,4-glucan chains using ADP-glucose. The chain is Glycogen synthase from Francisella tularensis subsp. tularensis (strain SCHU S4 / Schu 4).